Here is a 318-residue protein sequence, read N- to C-terminus: Esterase FVEG_12639 (318 aa).

Catalysis depends on residues Ser156, Asp255, and His285.

Belongs to the AB hydrolase 3 family.

Functionally, esterase; part of the Fusarium detoxification of benzoxazolinone cluster 2 (FDB2) involved in the degradation of benzoxazolinones produced by the host plant. Maize, wheat, and rye produce the 2 benzoxazinone phytoanticipins 2,4-dihy-droxy-7-methoxy-1,4-benzoxazin-3-one (DIMBOA) and 2,4-dihydroxy-1,4-benzoxazin-3-one (DIBOA) that, due to their inherent instability once released, spontaneously degrade to the more stable corresponding benzoxazolinones, 6-methoxy-2-benzoxazolinone (MBOA) and 2-benzoxazolinone (BOA), respectively. The first step in the detoxification of benzoxazolinones involves the hydrolysis of the cyclic ester bond of benzoxazolinones by the FDB1 cluster gamma-lactamase MBL1 to aminophenols. MBL1 is able to convert BOA into 2-aminophenol (2-AP), as well as MBOA into 5-methoxy-2-aminophenol (2-AMP). The FDB2 cluster N-malonyltransferase FDB2/NAT1 then metabolizes aminophenols via N-malonylation to non-toxic malonamic acids. FDB2/NAT1 converts 2-AP into N-(2-hydroxyphenyl) malonamic acid (HPMA) and 2-AMP into N-(2-hydroxy-4-methoxyphenyl) malonamic acid (HMPMA). The duplicated dienlactone hydrolases DLH1 and DLH2 may provide redundant function for hydrolyzing the lactone moiety in the BOA molecule. The roles of the amidases an other enzymes encoded by the 2 FDB clusters have not been identified so far. This chain is Esterase FVEG_12639, found in Gibberella moniliformis (strain M3125 / FGSC 7600) (Maize ear and stalk rot fungus).